Reading from the N-terminus, the 182-residue chain is ATP-dependent protease subunit HslV (182 aa).

Residue Thr12 is part of the active site. Na(+) is bound by residues Gly167, Cys170, and Thr173.

The protein belongs to the peptidase T1B family. HslV subfamily. As to quaternary structure, a double ring-shaped homohexamer of HslV is capped on each side by a ring-shaped HslU homohexamer. The assembly of the HslU/HslV complex is dependent on binding of ATP.

It is found in the cytoplasm. The catalysed reaction is ATP-dependent cleavage of peptide bonds with broad specificity.. Its activity is regulated as follows. Allosterically activated by HslU binding. Its function is as follows. Protease subunit of a proteasome-like degradation complex believed to be a general protein degrading machinery. The sequence is that of ATP-dependent protease subunit HslV from Acidiphilium cryptum (strain JF-5).